Reading from the N-terminus, the 42-residue chain is Photosystem II reaction center protein J (42 aa).

The chain crosses the membrane as a helical span at residues 10–30 (IPLWLIGTVVGSLAIGLLAIF).

This sequence belongs to the PsbJ family. In terms of assembly, PSII is composed of 1 copy each of membrane proteins PsbA, PsbB, PsbC, PsbD, PsbE, PsbF, PsbH, PsbI, PsbJ, PsbK, PsbL, PsbM, PsbT, PsbX, PsbY, PsbZ, Psb30/Ycf12, at least 3 peripheral proteins of the oxygen-evolving complex and a large number of cofactors. It forms dimeric complexes.

The protein localises to the plastid. It is found in the chloroplast thylakoid membrane. Its function is as follows. One of the components of the core complex of photosystem II (PSII). PSII is a light-driven water:plastoquinone oxidoreductase that uses light energy to abstract electrons from H(2)O, generating O(2) and a proton gradient subsequently used for ATP formation. It consists of a core antenna complex that captures photons, and an electron transfer chain that converts photonic excitation into a charge separation. This is Photosystem II reaction center protein J from Stigeoclonium helveticum (Green alga).